The sequence spans 500 residues: Protein nucleotidyltransferase YdiU (500 aa).

ATP is bound by residues Gly96, Gly98, Arg99, Lys119, Asp131, Gly132, Arg182, and Arg189. Asp258 serves as the catalytic Proton acceptor. Residues Asn259 and Asp268 each contribute to the Mg(2+) site. Residue Asp268 participates in ATP binding.

Belongs to the SELO family. The cofactor is Mg(2+). Requires Mn(2+) as cofactor.

It carries out the reaction L-seryl-[protein] + ATP = 3-O-(5'-adenylyl)-L-seryl-[protein] + diphosphate. It catalyses the reaction L-threonyl-[protein] + ATP = 3-O-(5'-adenylyl)-L-threonyl-[protein] + diphosphate. The enzyme catalyses L-tyrosyl-[protein] + ATP = O-(5'-adenylyl)-L-tyrosyl-[protein] + diphosphate. The catalysed reaction is L-histidyl-[protein] + UTP = N(tele)-(5'-uridylyl)-L-histidyl-[protein] + diphosphate. It carries out the reaction L-seryl-[protein] + UTP = O-(5'-uridylyl)-L-seryl-[protein] + diphosphate. It catalyses the reaction L-tyrosyl-[protein] + UTP = O-(5'-uridylyl)-L-tyrosyl-[protein] + diphosphate. Functionally, nucleotidyltransferase involved in the post-translational modification of proteins. It can catalyze the addition of adenosine monophosphate (AMP) or uridine monophosphate (UMP) to a protein, resulting in modifications known as AMPylation and UMPylation. The polypeptide is Protein nucleotidyltransferase YdiU (Rhizobium etli (strain ATCC 51251 / DSM 11541 / JCM 21823 / NBRC 15573 / CFN 42)).